Reading from the N-terminus, the 816-residue chain is uncharacterized protein (816 aa).

Disordered stretches follow at residues 1–81 (MDVV…NSNN) and 391–411 (LGSN…NNDF). The segment covering 28-44 (EVPPQRPRQQNRWKPWW) has biased composition (low complexity). Residues 64-81 (QGRSSPTTDFQDSVNSNN) are compositionally biased toward polar residues. Phosphoserine is present on residues Ser76 and Ser79. The span at 391–400 (LGSNSSTNEN) shows a compositional bias: low complexity.

This is an uncharacterized protein from Saccharomyces cerevisiae (strain ATCC 204508 / S288c) (Baker's yeast).